Here is a 210-residue protein sequence, read N- to C-terminus: Urease accessory protein UreG (210 aa).

G15–T22 is a GTP binding site.

This sequence belongs to the SIMIBI class G3E GTPase family. UreG subfamily. Homodimer. UreD, UreF and UreG form a complex that acts as a GTP-hydrolysis-dependent molecular chaperone, activating the urease apoprotein by helping to assemble the nickel containing metallocenter of UreC. The UreE protein probably delivers the nickel.

It is found in the cytoplasm. Its function is as follows. Facilitates the functional incorporation of the urease nickel metallocenter. This process requires GTP hydrolysis, probably effectuated by UreG. This chain is Urease accessory protein UreG, found in Ralstonia nicotianae (strain ATCC BAA-1114 / GMI1000) (Ralstonia solanacearum).